Consider the following 173-residue polypeptide: NADH-ubiquinone oxidoreductase chain 6 (173 aa).

5 helical membrane passes run 1 to 21, 24 to 44, 53 to 73, 87 to 107, and 141 to 161; these read MTYL…AVAS, APYF…GVLV, LVLF…SAAL, VLGY…LFWG, and GGML…VLEL.

Belongs to the complex I subunit 6 family.

Its subcellular location is the mitochondrion membrane. The enzyme catalyses a ubiquinone + NADH + 5 H(+)(in) = a ubiquinol + NAD(+) + 4 H(+)(out). In terms of biological role, core subunit of the mitochondrial membrane respiratory chain NADH dehydrogenase (Complex I) that is believed to belong to the minimal assembly required for catalysis. Complex I functions in the transfer of electrons from NADH to the respiratory chain. The immediate electron acceptor for the enzyme is believed to be ubiquinone. This chain is NADH-ubiquinone oxidoreductase chain 6 (MT-ND6), found in Oncorhynchus mykiss (Rainbow trout).